The sequence spans 406 residues: Argininosuccinate synthase (406 aa).

ATP is bound by residues alanine 10–serine 18 and alanine 37. The L-citrulline site is built by tyrosine 88 and serine 93. Position 118 (glycine 118) interacts with ATP. The L-aspartate site is built by threonine 120, asparagine 124, and aspartate 125. Residue asparagine 124 coordinates L-citrulline. Residues arginine 128, serine 180, serine 189, glutamate 265, and tyrosine 277 each contribute to the L-citrulline site.

This sequence belongs to the argininosuccinate synthase family. Type 1 subfamily. In terms of assembly, homotetramer.

Its subcellular location is the cytoplasm. It carries out the reaction L-citrulline + L-aspartate + ATP = 2-(N(omega)-L-arginino)succinate + AMP + diphosphate + H(+). It functions in the pathway amino-acid biosynthesis; L-arginine biosynthesis; L-arginine from L-ornithine and carbamoyl phosphate: step 2/3. The sequence is that of Argininosuccinate synthase from Methylobacillus flagellatus (strain ATCC 51484 / DSM 6875 / VKM B-1610 / KT).